We begin with the raw amino-acid sequence, 156 residues long: MAIKKIRTNDDPVLKRKAKKVTNIDDRLERLLTNMLDTMYEAEGIGLAAPQIGISKRVIVVDIGEDEIYQLINPEIVDTSDEQEKALEGCLSYPGLQGRVTRPVKVTVKALNPQEEEMIIEAEGLLARALQHEIDHLDGITFIDRAEEVFREEESH.

Fe cation-binding residues include cysteine 90 and histidine 132. Residue glutamate 133 is part of the active site. Histidine 136 serves as a coordination point for Fe cation.

This sequence belongs to the polypeptide deformylase family. It depends on Fe(2+) as a cofactor.

The catalysed reaction is N-terminal N-formyl-L-methionyl-[peptide] + H2O = N-terminal L-methionyl-[peptide] + formate. Functionally, removes the formyl group from the N-terminal Met of newly synthesized proteins. Requires at least a dipeptide for an efficient rate of reaction. N-terminal L-methionine is a prerequisite for activity but the enzyme has broad specificity at other positions. In Natranaerobius thermophilus (strain ATCC BAA-1301 / DSM 18059 / JW/NM-WN-LF), this protein is Peptide deformylase.